Reading from the N-terminus, the 348-residue chain is Dihydroorotase (348 aa).

The Zn(2+) site is built by histidine 17 and histidine 19. Residues 19-21 (HLR) and asparagine 45 each bind substrate. Zn(2+)-binding residues include lysine 103, histidine 140, and histidine 178. Lysine 103 is subject to N6-carboxylysine. Histidine 140 serves as a coordination point for substrate. Substrate is bound at residue leucine 223. Aspartate 251 provides a ligand contact to Zn(2+). Residue aspartate 251 is part of the active site. Substrate contacts are provided by histidine 255 and alanine 267.

Belongs to the metallo-dependent hydrolases superfamily. DHOase family. Class II DHOase subfamily. Homodimer. Zn(2+) serves as cofactor.

The enzyme catalyses (S)-dihydroorotate + H2O = N-carbamoyl-L-aspartate + H(+). Its pathway is pyrimidine metabolism; UMP biosynthesis via de novo pathway; (S)-dihydroorotate from bicarbonate: step 3/3. Functionally, catalyzes the reversible cyclization of carbamoyl aspartate to dihydroorotate. The polypeptide is Dihydroorotase (Shigella flexneri serotype 5b (strain 8401)).